The sequence spans 192 residues: Mediator of RNA polymerase II transcription subunit 29 (192 aa).

A disordered region spans residues M32 to Q51.

The protein belongs to the Mediator complex subunit 29 family. Component of the Mediator complex.

The protein localises to the nucleus. Component of the Mediator complex, a coactivator involved in the regulated transcription of nearly all RNA polymerase II-dependent genes. Mediator functions as a bridge to convey information from gene-specific regulatory proteins to the basal RNA polymerase II transcription machinery. Mediator is recruited to promoters by direct interactions with regulatory proteins and serves as a scaffold for the assembly of a functional preinitiation complex with RNA polymerase II and the general transcription factors. This is Mediator of RNA polymerase II transcription subunit 29 (ix) from Bombyx mori (Silk moth).